The chain runs to 344 residues: S-methyl-5'-thioadenosine phosphorylase (344 aa).

Phosphate is bound by residues Thr51, 99–100 (RH), and 132–133 (SA). Met234 is a binding site for substrate. Ser235 serves as a coordination point for phosphate. 258-260 (DYD) contacts substrate.

This sequence belongs to the PNP/MTAP phosphorylase family. MTAP subfamily. As to quaternary structure, homotrimer.

Its subcellular location is the cytoplasm. The protein resides in the nucleus. The catalysed reaction is S-methyl-5'-thioadenosine + phosphate = 5-(methylsulfanyl)-alpha-D-ribose 1-phosphate + adenine. The protein operates within amino-acid biosynthesis; L-methionine biosynthesis via salvage pathway; S-methyl-5-thio-alpha-D-ribose 1-phosphate from S-methyl-5'-thioadenosine (phosphorylase route): step 1/1. Functionally, catalyzes the reversible phosphorylation of S-methyl-5'-thioadenosine (MTA) to adenine and 5-methylthioribose-1-phosphate. Involved in the breakdown of MTA, a major by-product of polyamine biosynthesis. Responsible for the first step in the methionine salvage pathway after MTA has been generated from S-adenosylmethionine. Has broad substrate specificity with 6-aminopurine nucleosides as preferred substrates. The sequence is that of S-methyl-5'-thioadenosine phosphorylase from Phaeosphaeria nodorum (strain SN15 / ATCC MYA-4574 / FGSC 10173) (Glume blotch fungus).